A 1776-amino-acid chain; its full sequence is 6-methylsalicylic acid synthase (1776 aa).

Positions Met-1 to Pro-18 are enriched in low complexity. A disordered region spans residues Met-1 to Tyr-26. Residues Ser-32–Glu-457 form the Ketosynthase family 3 (KS3) domain. Catalysis depends on for beta-ketoacyl synthase activity residues Cys-204, His-339, and His-379. Residues Val-567–Glu-880 are malonyl-CoA:ACP transacylase (MAT) domain. The segment at His-925–Ser-1044 is N-terminal hotdog fold. The segment at His-925–Glu-1196 is dehydratase (DH) domain. The PKS/mFAS DH domain maps to His-925–Val-1201. His-957 functions as the Proton acceptor; for dehydratase activity in the catalytic mechanism. The tract at residues Thr-1058 to Val-1201 is C-terminal hotdog fold. Asp-1113 serves as the catalytic Proton donor; for dehydratase activity. The interval Met-1205–Glu-1657 is product template (PT) domain. Residues Ala-1700–Ile-1774 form the Carrier domain. O-(pantetheine 4'-phosphoryl)serine is present on Ser-1734.

It is found in the cytoplasm. The protein resides in the cytosol. The catalysed reaction is 3 malonyl-CoA + acetyl-CoA + NADPH + 3 H(+) = 6-methylsalicylate + 3 CO2 + NADP(+) + 4 CoA + H2O. The protein operates within mycotoxin biosynthesis; patulin biosynthesis. Its function is as follows. 6-methylsalicylic acid synthase; part of the gene cluster that mediates the biosynthesis of patulin, an acetate-derived tetraketide mycotoxin produced by several fungal species that shows antimicrobial properties against several bacteria. PatK catalyzes the first step of the pathway which is the synthesis of 6-methylsalicylic acid via condensation of 1 acetate and 3 malonate units. The pathway begins with the synthesis of 6-methylsalicylic acid by the polyketide synthase (PKS) patK via condensation of acetate and malonate units. The 6-methylsalicylic acid decarboxylase patG then catalyzes the decarboxylation of 6-methylsalicylic acid to yield m-cresol (also known as 3-methylphenol). These first reactions occur in the cytosol. The intermediate m-cresol is then transported into the endoplasmic reticulum where the cytochrome P450 monooxygenase patH converts it to m-hydroxybenzyl alcohol, which is further converted to gentisyl alcohol by the cytochrome P450 monooxygenase patI. The oxidoreductases patJ and patO further convert gentisyl alcohol to isoepoxydon in the vacuole. PatN catalyzes then the transformation of isoepoxydon into phyllostine. The cluster protein patF is responsible for the conversion from phyllostine to neopatulin whereas the alcohol dehydrogenase patD converts neopatulin to E-ascladiol. The steps between isoepoxydon and E-ascladiol occur in the cytosol, and E-ascladiol is probably secreted to the extracellular space by one of the cluster-specific transporters patC or patM. Finally, the secreted patulin synthase patE catalyzes the conversion of E-ascladiol to patulin. The polypeptide is 6-methylsalicylic acid synthase (Penicillium expansum (Blue mold rot fungus)).